Here is a 130-residue protein sequence, read N- to C-terminus: MSNVPAELKYVESHEWVRAEGNDEYTVGITEHAQELLGDMVFVDLPEVGDQINLGDDCAVVESVKAASDIYAPLSGKIIAVNDALNDAPELVNSEPYHEGWLFRIKASDKSELSSLLNAEGYQALLDEEE.

Positions 24–106 (EYTVGITEHA…YHEGWLFRIK (83 aa)) constitute a Lipoyl-binding domain. K65 bears the N6-lipoyllysine mark.

Belongs to the GcvH family. In terms of assembly, the glycine cleavage system is composed of four proteins: P, T, L and H. The cofactor is (R)-lipoate.

Functionally, the glycine cleavage system catalyzes the degradation of glycine. The H protein shuttles the methylamine group of glycine from the P protein to the T protein. This chain is Glycine cleavage system H protein, found in Photorhabdus laumondii subsp. laumondii (strain DSM 15139 / CIP 105565 / TT01) (Photorhabdus luminescens subsp. laumondii).